Here is a 1380-residue protein sequence, read N- to C-terminus: DNA-directed RNA polymerase subunit beta (1380 aa).

It belongs to the RNA polymerase beta chain family. As to quaternary structure, the RNAP catalytic core consists of 2 alpha, 1 beta, 1 beta' and 1 omega subunit. When a sigma factor is associated with the core the holoenzyme is formed, which can initiate transcription.

The catalysed reaction is RNA(n) + a ribonucleoside 5'-triphosphate = RNA(n+1) + diphosphate. Its function is as follows. DNA-dependent RNA polymerase catalyzes the transcription of DNA into RNA using the four ribonucleoside triphosphates as substrates. The polypeptide is DNA-directed RNA polymerase subunit beta (Rhizobium meliloti (strain 1021) (Ensifer meliloti)).